Consider the following 350-residue polypeptide: SUMO-activating enzyme subunit 1 (350 aa).

M1 is subject to N-acetylmethionine. V2 is modified (N-acetylvaline; in SUMO-activating enzyme subunit 1, N-terminally processed). S16 is modified (phosphoserine). K202 carries the N6-acetyllysine modification.

It belongs to the ubiquitin-activating E1 family. In terms of assembly, heterodimer of SAE1 and UBA2/SAE2. The heterodimer corresponds to the two domains that are encoded on a single polypeptide chain in ubiquitin-activating enzyme E1. Interacts with UBE2I. In terms of tissue distribution, broadly expressed, with highest levels in testis.

It is found in the nucleus. Its pathway is protein modification; protein sumoylation. The heterodimer acts as an E1 ligase for SUMO1, SUMO2, SUMO3, and probably SUMO4. It mediates ATP-dependent activation of SUMO proteins followed by formation of a thioester bond between a SUMO protein and a conserved active site cysteine residue on UBA2/SAE2. The polypeptide is SUMO-activating enzyme subunit 1 (Sae1) (Mus musculus (Mouse)).